Reading from the N-terminus, the 117-residue chain is DNA-directed RNA polymerase II subunit RPB11 (117 aa).

Belongs to the archaeal Rpo11/eukaryotic RPB11/RPC19 RNA polymerase subunit family. In terms of assembly, component of the RNA polymerase II (Pol II) complex consisting of 12 subunits.

It is found in the nucleus. Its function is as follows. DNA-dependent RNA polymerase catalyzes the transcription of DNA into RNA using the four ribonucleoside triphosphates as substrates. Component of RNA polymerase II which synthesizes mRNA precursors and many functional non-coding RNAs. Pol II is the central component of the basal RNA polymerase II transcription machinery. It is composed of mobile elements that move relative to each other. RPB11 is part of the core element with the central large cleft. This chain is DNA-directed RNA polymerase II subunit RPB11, found in Drosophila melanogaster (Fruit fly).